Consider the following 115-residue polypeptide: Ustilagic acid biosynthesis cluster protein orf3 (115 aa).

Residues 1–38 (MTYSKIACSLGKRGIARAPNQASSFFLLLFLFAKFSQQ) form the signal peptide. Positions 42 to 62 (SPCLASSGVAKSRGPASTDRP) are disordered.

It functions in the pathway secondary metabolite biosynthesis. In terms of biological role, part of the gene cluster that mediates the biosynthesis of the glycolipid biosurfactant ustilagic acid (UA). UA is a secreted cellobiose glycolipid that is toxic for many microorganisms and confers biocontrol activity to U.maydis. UA consists of 15,16-dihydroxypalmitic or 2,15,16-trihydroxypalmitic acid, which is O-glycosidically linked to cellobiose at its terminal hydroxyl group. In addition, the cellobiose moiety is acetylated and acylated with a short-chain hydroxy fatty acid. UA biosynthesis starts with omega-hydroxylation of palmitic acid catalyzed by the cytochrome P450 monooxygenase cyp1. Terminal hydroxylation of palmitic acid precedes subterminal hydroxylation catalyzed by the cytochrome P450 monooxygenase cyp2. Sequential glucosylation of the hydroxy fatty acid is probably catalyzed by the glycosyltransferase ugt1. The cellobiose lipid is further decorated by acetylation of the proximal glucose residue and by acylation with a short-chain beta-hydroxy fatty acid at the distal glucose residue. The acyltransferase uat1 may be a good candidate for catalyzing either acetylation or acylation of the cellobiose lipid. The fatty acid synthase fas2 may be involved in synthesis of the carbon backbone of the short-chain beta-hydroxy fatty acid esterified to the cellobiose disaccharide. The secreted UA consists of a mixture of both alpha-hydroxylated and non-hydroxylated glycolipids; therefore, alpha-hydroxylation of the long-chain fatty, catalyzed by the fatty acid hydroxylase ahd1, occurs late in UA biosynthesis and may be the last step before secretion. This chain is Ustilagic acid biosynthesis cluster protein orf3, found in Mycosarcoma maydis (Corn smut fungus).